The following is a 340-amino-acid chain: Short-chain dehydrogenase/reductase ffsI (340 aa).

6 residues coordinate NADP(+): Leu-46, Arg-71, Asp-96, Asn-123, Tyr-211, and Lys-215. Tyr-211 (proton acceptor) is an active-site residue. Lys-215 functions as the Lowers pKa of active site Tyr in the catalytic mechanism.

It belongs to the short-chain dehydrogenases/reductases (SDR) family.

It participates in mycotoxin biosynthesis. Short-chain dehydrogenase/reductase; part of the gene cluster that mediates the biosynthesis of the cytotoxic leucine-containing cytochalasans, including aspochalasin C, aspochalasin E, TMC-169, flavichalasine F, aspergillin PZ, aspochalasin M and flavichalasine G. The first step in the pathway is catalyzed by the hybrid PKS-NRPS ffsA that utilizes 8 units of malonyl-CoA to iteratively assemble the octaketide chain before addition of L-leucine by the C-terminal NRPS modules. Because ffsA lacks a designated enoylreductase (ER) domain, the required activity is provided the enoyl reductase fssC. The methyltransferase (MT) domain of ffsA catalyzes the alpha-methylation at C10 and C14 using S-adenosyl-L-methionine as the methyl-donating cosubstrate. Reduction by the hydrolyase ffsE, followed by dehydration and intra-molecular Diels-Alder cyclization by the Diels-Alderase ffsF then yield the required isoindolone-fused macrocycle. A number of oxidative steps catalyzed by the tailoring cytochrome P450 monooxygenase ffsD, the FAD-linked oxidoreductase ffsJ and the short-chain dehydrogenase/reductase ffsI, are further required to afford the final products. This is Short-chain dehydrogenase/reductase ffsI from Aspergillus flavipes.